Consider the following 215-residue polypeptide: Adenylate kinase (215 aa).

Residue 10–15 (GAGKGT) coordinates ATP. The interval 30-59 (STGDIFRDAVNQGSELGQEAQKYMSSGQLV) is NMP. AMP is bound by residues threonine 31, arginine 36, 57-59 (QLV), 85-88 (GFPR), and glutamine 92. Residues 126–163 (GRISCRECKRVYNLNFNPPREQGKCDSCGGELVQRNDD) are LID. Arginine 127 is a binding site for ATP. Zn(2+) is bound by residues cysteine 130 and cysteine 133. Residue 136–137 (VY) participates in ATP binding. Cysteine 150 and cysteine 153 together coordinate Zn(2+). Positions 160 and 171 each coordinate AMP. Residue arginine 199 participates in ATP binding.

This sequence belongs to the adenylate kinase family. As to quaternary structure, monomer.

It is found in the cytoplasm. The catalysed reaction is AMP + ATP = 2 ADP. It functions in the pathway purine metabolism; AMP biosynthesis via salvage pathway; AMP from ADP: step 1/1. In terms of biological role, catalyzes the reversible transfer of the terminal phosphate group between ATP and AMP. Plays an important role in cellular energy homeostasis and in adenine nucleotide metabolism. This chain is Adenylate kinase, found in Syntrophomonas wolfei subsp. wolfei (strain DSM 2245B / Goettingen).